The following is a 542-amino-acid chain: NAD-dependent deacetylase sir2D (542 aa).

Disordered stretches follow at residues 1 to 37 (MNKR…NTPL) and 136 to 160 (ETST…TTTT). The segment covering 8 to 25 (NNELNEIQNNQNKNNNNK) has biased composition (low complexity). The stretch at 165 to 193 (NETILLDILNNNKDEVDDEIQRIGNNVGN) forms a coiled coil. The region spanning 283 to 542 (ATLDLSTFEK…VQDLLNKVKW (260 aa)) is the Deacetylase sirtuin-type domain. His-411 acts as the Proton acceptor in catalysis. Residues Cys-419, Cys-422, Cys-443, and Cys-446 each coordinate Zn(2+).

Belongs to the sirtuin family. Zn(2+) is required as a cofactor.

The enzyme catalyses N(6)-acetyl-L-lysyl-[protein] + NAD(+) + H2O = 2''-O-acetyl-ADP-D-ribose + nicotinamide + L-lysyl-[protein]. Functionally, NAD-dependent deacetylase, which plays an important role in the regulation of transcriptional repression. The chain is NAD-dependent deacetylase sir2D (sir2D) from Dictyostelium discoideum (Social amoeba).